We begin with the raw amino-acid sequence, 319 residues long: 4-hydroxy-3-methylbut-2-enyl diphosphate reductase (319 aa).

Position 17 (Cys-17) interacts with [4Fe-4S] cluster. Residues His-46 and His-79 each contribute to the (2E)-4-hydroxy-3-methylbut-2-enyl diphosphate site. Residues His-46 and His-79 each coordinate dimethylallyl diphosphate. Isopentenyl diphosphate is bound by residues His-46 and His-79. Cys-101 contributes to the [4Fe-4S] cluster binding site. His-129 lines the (2E)-4-hydroxy-3-methylbut-2-enyl diphosphate pocket. His-129 provides a ligand contact to dimethylallyl diphosphate. His-129 contributes to the isopentenyl diphosphate binding site. The active-site Proton donor is Glu-131. Thr-170 provides a ligand contact to (2E)-4-hydroxy-3-methylbut-2-enyl diphosphate. Residue Cys-200 coordinates [4Fe-4S] cluster. Residues Ser-228, Ser-229, Asn-230, and Ser-273 each contribute to the (2E)-4-hydroxy-3-methylbut-2-enyl diphosphate site. 4 residues coordinate dimethylallyl diphosphate: Ser-228, Ser-229, Asn-230, and Ser-273. Ser-228, Ser-229, Asn-230, and Ser-273 together coordinate isopentenyl diphosphate.

The protein belongs to the IspH family. It depends on [4Fe-4S] cluster as a cofactor.

It catalyses the reaction isopentenyl diphosphate + 2 oxidized [2Fe-2S]-[ferredoxin] + H2O = (2E)-4-hydroxy-3-methylbut-2-enyl diphosphate + 2 reduced [2Fe-2S]-[ferredoxin] + 2 H(+). The catalysed reaction is dimethylallyl diphosphate + 2 oxidized [2Fe-2S]-[ferredoxin] + H2O = (2E)-4-hydroxy-3-methylbut-2-enyl diphosphate + 2 reduced [2Fe-2S]-[ferredoxin] + 2 H(+). It participates in isoprenoid biosynthesis; dimethylallyl diphosphate biosynthesis; dimethylallyl diphosphate from (2E)-4-hydroxy-3-methylbutenyl diphosphate: step 1/1. The protein operates within isoprenoid biosynthesis; isopentenyl diphosphate biosynthesis via DXP pathway; isopentenyl diphosphate from 1-deoxy-D-xylulose 5-phosphate: step 6/6. In terms of biological role, catalyzes the conversion of 1-hydroxy-2-methyl-2-(E)-butenyl 4-diphosphate (HMBPP) into a mixture of isopentenyl diphosphate (IPP) and dimethylallyl diphosphate (DMAPP). Acts in the terminal step of the DOXP/MEP pathway for isoprenoid precursor biosynthesis. The polypeptide is 4-hydroxy-3-methylbut-2-enyl diphosphate reductase (Cereibacter sphaeroides (strain ATCC 17029 / ATH 2.4.9) (Rhodobacter sphaeroides)).